Reading from the N-terminus, the 241-residue chain is MDKDELKEIIKNLPDNSPKILEYLKLAKEKGWKDIVNMIAQKLGLEEEEKKKTDETDVLKKILKPLGKGKIKGTWDYSVDFVEAKKTLVSAYKQLYDTNLMPYEAYVAILLIQLVNGCRIREAIRAFKTFIESGEREFQLQAQKHGNIRFMIIPDVVKKKATYNAVLTIDDEKLSARIRMFALHYLKANTHSLRYALISYLAKNGIDPAIIAKITGHKRLDRIITYTQTKDAIEMLRKLAD.

In terms of domain architecture, Tyr recombinase spans 82–241; the sequence is VEAKKTLVSA…AIEMLRKLAD (160 aa). Residues arginine 119, lysine 144, histidine 191, arginine 194, and histidine 217 contribute to the active site. Catalysis depends on tyrosine 226, which acts as the O-(3'-phospho-DNA)-tyrosine intermediate.

It belongs to the 'phage' integrase family.

Its function is as follows. This protein may encode an integrase, which is necessary for integration of the viral DNA into host genome. This Acidianus convivator (ATV) protein is Putative integrase ORF241.